The primary structure comprises 610 residues: UvrABC system protein C (610 aa).

A GIY-YIG domain is found at 16–94 (SQPGVYRMYD…IKLYQPRYNV (79 aa)). Residues 204 to 239 (DQVLTQLISRMETASQNLEFEEAARIRDQIQAVRRV) form the UVR domain.

Belongs to the UvrC family. Interacts with UvrB in an incision complex.

It localises to the cytoplasm. Functionally, the UvrABC repair system catalyzes the recognition and processing of DNA lesions. UvrC both incises the 5' and 3' sides of the lesion. The N-terminal half is responsible for the 3' incision and the C-terminal half is responsible for the 5' incision. The sequence is that of UvrABC system protein C from Shigella boydii serotype 18 (strain CDC 3083-94 / BS512).